A 738-amino-acid chain; its full sequence is Eukaryotic translation initiation factor 3 subunit B (738 aa).

Positions 1–120 (MCGCVGVISN…LFIQFKTAQM (120 aa)) are sufficient for interaction with HCR1 and TIF32. The segment at 1–245 (MCGCVGVISN…GIQSWGGAQF (245 aa)) is sufficient for interaction with PIC8. Positions 59–146 (NFVVVDGAPI…HRLLVNKLSD (88 aa)) constitute an RRM domain. WD repeat units follow at residues 211–250 (PRKG…SISK), 322–360 (QKEM…LLDK), 363–406 (VKID…QTAR), and 537–579 (VVDK…ENVR).

It belongs to the eIF-3 subunit B family. Component of the eukaryotic translation initiation factor 3 (eIF-3) complex.

The protein resides in the cytoplasm. Functionally, RNA-binding component of the eukaryotic translation initiation factor 3 (eIF-3) complex, which is involved in protein synthesis of a specialized repertoire of mRNAs and, together with other initiation factors, stimulates binding of mRNA and methionyl-tRNAi to the 40S ribosome. The eIF-3 complex specifically targets and initiates translation of a subset of mRNAs involved in cell proliferation. This is Eukaryotic translation initiation factor 3 subunit B from Meyerozyma guilliermondii (strain ATCC 6260 / CBS 566 / DSM 6381 / JCM 1539 / NBRC 10279 / NRRL Y-324) (Yeast).